Reading from the N-terminus, the 194-residue chain is Fe/S biogenesis protein NfuA (194 aa).

Residues C151 and C154 each contribute to the [4Fe-4S] cluster site.

It belongs to the NfuA family. Homodimer. It depends on [4Fe-4S] cluster as a cofactor.

Functionally, involved in iron-sulfur cluster biogenesis. Binds a 4Fe-4S cluster, can transfer this cluster to apoproteins, and thereby intervenes in the maturation of Fe/S proteins. Could also act as a scaffold/chaperone for damaged Fe/S proteins. The polypeptide is Fe/S biogenesis protein NfuA (Vibrio vulnificus (strain CMCP6)).